A 383-amino-acid chain; its full sequence is Probable acyl-CoA dehydrogenase YdiO (383 aa).

This sequence belongs to the acyl-CoA dehydrogenase family. FAD is required as a cofactor.

It carries out the reaction a 2,3-saturated acyl-CoA + A = a 2,3-dehydroacyl-CoA + AH2. This Escherichia coli O157:H7 protein is Probable acyl-CoA dehydrogenase YdiO (ydiO).